The chain runs to 844 residues: 3',5'-cyclic-AMP phosphodiesterase 4A (844 aa).

The interval 1–124 is disordered; that stretch reads MEPPAAPSER…RSPLDSQASP (124 aa). Serine 13 bears the Phosphoserine mark. Low complexity predominate over residues 36-46; that stretch reads QPRTPIRIQQR. Over residues 51–78 the composition is skewed to basic and acidic residues; sequence SAERSETERSPHRPIERADAVDTGDRPG. Positions 82–91 are enriched in polar residues; the sequence is TRMSWPSSFH. Position 147 is a phosphoserine; by MAPKAPK2 (serine 147). Phosphoserine occurs at positions 152, 160, and 204. Residues 296–317 are disordered; it reads PSPTPRQRAFQQPPPSVLRQSQ. Phosphoserine is present on serine 333. Positions 343–672 constitute a PDEase domain; it reads VKTDQEDLLA…DWYHSAIRQS (330 aa). Lysine 344 is covalently cross-linked (Glycyl lysine isopeptide (Lys-Gly) (interchain with G-Cter in SUMO)). The Proton donor role is filled by histidine 419. Histidine 419 is a binding site for 3',5'-cyclic AMP. Residues histidine 419 and histidine 423 each coordinate AMP. Zn(2+)-binding residues include histidine 423, histidine 459, aspartate 460, and aspartate 577. 4 residues coordinate AMP: aspartate 460, aspartate 577, glutamine 628, and phenylalanine 631. Position 460 (aspartate 460) interacts with Mg(2+). Mn(2+) is bound at residue aspartate 460. 3',5'-cyclic AMP-binding residues include glutamine 628 and phenylalanine 631. 2 disordered regions span residues 668–690 and 818–844; these read AIRQ…PSLP and SACS…GDPA. Phosphoserine is present on residues serine 672 and serine 674. The span at 820–830 shows a compositional bias: polar residues; sequence CSGTSGDNSAI.

This sequence belongs to the cyclic nucleotide phosphodiesterase family. PDE4 subfamily. Interacts with LYN (via SH3 domain). Interacts with ARRB2. Zn(2+) is required as a cofactor. The cofactor is Mg(2+). It depends on Mn(2+) as a cofactor. Post-translationally, phosphorylated by MAPKAPK2 at Ser-147; it counteracts PKA-induced activation of PDE4A and modulates intracellular cAMP levels. Likely involved in cellular desensitization to cAMP signaling. In terms of processing, proteolytically cleaved by CASP3. As to expression, isoform 2 is testis specific.

Its subcellular location is the cytoplasm. The protein localises to the cytosol. The protein resides in the membrane. The catalysed reaction is 3',5'-cyclic AMP + H2O = AMP + H(+). It participates in purine metabolism; 3',5'-cyclic AMP degradation; AMP from 3',5'-cyclic AMP: step 1/1. Inhibited by rolipram. Functionally, hydrolyzes the second messenger 3',5'-cyclic AMP (cAMP), which is a key regulator of many important physiological processes. In terms of biological role, efficiently hydrolyzes cAMP. This is 3',5'-cyclic-AMP phosphodiesterase 4A (Pde4a) from Rattus norvegicus (Rat).